Reading from the N-terminus, the 373-residue chain is Probable tRNA sulfurtransferase (373 aa).

The THUMP domain occupies 54–158 (NKNIEELSKV…NDVAYFYYKI (105 aa)). ATP-binding positions include 176 to 177 (LF), 201 to 202 (NF), Lys-256, Gly-278, and Gln-287.

The protein belongs to the ThiI family.

The protein localises to the cytoplasm. It catalyses the reaction [ThiI sulfur-carrier protein]-S-sulfanyl-L-cysteine + a uridine in tRNA + 2 reduced [2Fe-2S]-[ferredoxin] + ATP + H(+) = [ThiI sulfur-carrier protein]-L-cysteine + a 4-thiouridine in tRNA + 2 oxidized [2Fe-2S]-[ferredoxin] + AMP + diphosphate. The enzyme catalyses [ThiS sulfur-carrier protein]-C-terminal Gly-Gly-AMP + S-sulfanyl-L-cysteinyl-[cysteine desulfurase] + AH2 = [ThiS sulfur-carrier protein]-C-terminal-Gly-aminoethanethioate + L-cysteinyl-[cysteine desulfurase] + A + AMP + 2 H(+). The protein operates within cofactor biosynthesis; thiamine diphosphate biosynthesis. In terms of biological role, catalyzes the ATP-dependent transfer of a sulfur to tRNA to produce 4-thiouridine in position 8 of tRNAs, which functions as a near-UV photosensor. Also catalyzes the transfer of sulfur to the sulfur carrier protein ThiS, forming ThiS-thiocarboxylate. This is a step in the synthesis of thiazole, in the thiamine biosynthesis pathway. The sulfur is donated as persulfide by IscS. The polypeptide is Probable tRNA sulfurtransferase (Saccharolobus islandicus (strain Y.N.15.51 / Yellowstone #2) (Sulfolobus islandicus)).